Reading from the N-terminus, the 719-residue chain is Glutamate--tRNA ligase, cytoplasmic (719 aa).

Serine 93 serves as a coordination point for ATP. The interval 176–205 (SGKPVAAPKSKDSQQAVKGDGQDKGKPEVD) is disordered. The segment covering 195–204 (DGQDKGKPEV) has biased composition (basic and acidic residues). Residue 217 to 219 (RFA) coordinates L-glutamate. The short motif at 220–230 (PEPSGYLHIGH) is the 'HIGH' region element. Histidine 227 serves as a coordination point for ATP. Residues 393–397 (YDFAC) and arginine 411 contribute to the L-glutamate site. ATP-binding positions include glutamate 414 and 448 to 452 (LLSKR). The short motif at 448–452 (LLSKR) is the 'KMSKS' region element.

Belongs to the class-I aminoacyl-tRNA synthetase family. Glutamate--tRNA ligase type 2 subfamily. As to quaternary structure, interacts with GLN2, COL4 and RPP13L4/ZAR1.

It localises to the cytoplasm. It is found in the cytosol. The enzyme catalyses tRNA(Glu) + L-glutamate + ATP = L-glutamyl-tRNA(Glu) + AMP + diphosphate. Catalyzes the attachment of glutamate to tRNA(Glu) in a two-step reaction: glutamate is first activated by ATP to form Glu-AMP and then transferred to the acceptor end of tRNA(Glu). The sequence is that of Glutamate--tRNA ligase, cytoplasmic from Arabidopsis thaliana (Mouse-ear cress).